The chain runs to 343 residues: Cytoplasmic tRNA 2-thiolation protein 1 (343 aa).

This sequence belongs to the TtcA family. CTU1/NCS6/ATPBD3 subfamily.

Its subcellular location is the cytoplasm. Its pathway is tRNA modification; 5-methoxycarbonylmethyl-2-thiouridine-tRNA biosynthesis. In terms of biological role, plays a central role in 2-thiolation of mcm(5)S(2)U at tRNA wobble positions of tRNA(Lys), tRNA(Glu) and tRNA(Gln). Directly binds tRNAs and probably acts by catalyzing adenylation of tRNAs, an intermediate required for 2-thiolation. It is unclear whether it acts as a sulfurtransferase that transfers sulfur from thiocarboxylated URM1 onto the uridine of tRNAs at wobble position. The chain is Cytoplasmic tRNA 2-thiolation protein 1 from Drosophila erecta (Fruit fly).